The chain runs to 89 residues: Arminin 7591 (89 aa).

The signal sequence occupies residues 1–18 (MRSAFAVLFLALIAITYS). The propeptide occupies 19–58 (KNYEDVKEEIKNEVENEILKDLEEDVNEFDDNVQEEVNDA). L86 is subject to Leucine amide.

Belongs to the arminin family. As to expression, expressed in entodermal epithelium along the body column.

It localises to the secreted. The protein resides in the target cell membrane. Antimicrobial peptide with a broad-spectrum antimicrobial activity. Keeps its antibacterial activity under a wide range of salt concentrations that mimic physiological conditions of human blood, which is surprising, since Hydra is an obligate freshwater animal with nearly no salt tolerance. Does not affect red blood cells. The polypeptide is Arminin 7591 (Hydra vulgaris (Hydra)).